Here is a 395-residue protein sequence, read N- to C-terminus: 1-deoxy-D-xylulose 5-phosphate reductoisomerase (395 aa).

NADPH is bound by residues threonine 15, glycine 16, serine 17, isoleucine 18, glycine 41, asparagine 43, and asparagine 126. Residue lysine 127 participates in 1-deoxy-D-xylulose 5-phosphate binding. Residue glutamate 128 coordinates NADPH. A Mn(2+)-binding site is contributed by aspartate 152. 1-deoxy-D-xylulose 5-phosphate-binding residues include serine 153, glutamate 154, serine 178, and histidine 201. Glutamate 154 is a Mn(2+) binding site. Position 207 (glycine 207) interacts with NADPH. Serine 214, asparagine 219, lysine 220, and glutamate 223 together coordinate 1-deoxy-D-xylulose 5-phosphate. Glutamate 223 contacts Mn(2+).

This sequence belongs to the DXR family. Requires Mg(2+) as cofactor. The cofactor is Mn(2+).

The enzyme catalyses 2-C-methyl-D-erythritol 4-phosphate + NADP(+) = 1-deoxy-D-xylulose 5-phosphate + NADPH + H(+). The protein operates within isoprenoid biosynthesis; isopentenyl diphosphate biosynthesis via DXP pathway; isopentenyl diphosphate from 1-deoxy-D-xylulose 5-phosphate: step 1/6. Catalyzes the NADPH-dependent rearrangement and reduction of 1-deoxy-D-xylulose-5-phosphate (DXP) to 2-C-methyl-D-erythritol 4-phosphate (MEP). This Ruegeria sp. (strain TM1040) (Silicibacter sp.) protein is 1-deoxy-D-xylulose 5-phosphate reductoisomerase.